Reading from the N-terminus, the 418-residue chain is Tyrosine--tRNA ligase (418 aa).

Tyr-38 serves as a coordination point for L-tyrosine. The 'HIGH' region signature appears at 43–52; that stretch reads CTARSLHIGS. Positions 175 and 179 each coordinate L-tyrosine. The 'KMSKS' region signature appears at 235–239; the sequence is KMGKT. Lys-238 contributes to the ATP binding site. The region spanning 348–413 is the S4 RNA-binding domain; that stretch reads LSVVKLLQVS…CGKKRHLKVV (66 aa).

Belongs to the class-I aminoacyl-tRNA synthetase family. TyrS type 1 subfamily. Homodimer.

The protein resides in the cytoplasm. It catalyses the reaction tRNA(Tyr) + L-tyrosine + ATP = L-tyrosyl-tRNA(Tyr) + AMP + diphosphate + H(+). Catalyzes the attachment of tyrosine to tRNA(Tyr) in a two-step reaction: tyrosine is first activated by ATP to form Tyr-AMP and then transferred to the acceptor end of tRNA(Tyr). In Ehrlichia ruminantium (strain Welgevonden), this protein is Tyrosine--tRNA ligase.